The following is a 512-amino-acid chain: Beta-glucosidase 44 (512 aa).

Positions M1–G23 are cleaved as a signal peptide. Residue Q58 coordinates a beta-D-glucoside. The N-linked (GlcNAc...) asparagine glycan is linked to N86. Residues H159 and N204 to E205 contribute to the a beta-D-glucoside site. Catalysis depends on E205, which acts as the Proton donor. C224 and C231 are joined by a disulfide. N230 carries an N-linked (GlcNAc...) asparagine glycan. A beta-D-glucoside contacts are provided by Y347 and E419. The active-site Nucleophile is the E419. N427 is a glycosylation site (N-linked (GlcNAc...) asparagine). Residues W466, E473–W474, and F482 contribute to the a beta-D-glucoside site.

This sequence belongs to the glycosyl hydrolase 1 family. In terms of assembly, homodimer.

It is found in the secreted. The enzyme catalyses Hydrolysis of terminal, non-reducing beta-D-glucosyl residues with release of beta-D-glucose.. Its function is as follows. Hydrolyzes p-nitrophenyl beta-D-glucoside, p-nitrophenyl beta-D-mannoside, cellobiose, 4-methylumbelliferyl-beta-D-glucoside, laminarin, amygdalin, esculin and gentiobiose. This is Beta-glucosidase 44 from Arabidopsis thaliana (Mouse-ear cress).